A 217-amino-acid chain; its full sequence is Octanoyltransferase (217 aa).

Positions Ser32–His207 constitute a BPL/LPL catalytic domain. Residues Arg71–His78, Ser138–Gly140, and Gly151–Ala153 each bind substrate. Cys169 serves as the catalytic Acyl-thioester intermediate.

This sequence belongs to the LipB family.

The protein resides in the cytoplasm. The catalysed reaction is octanoyl-[ACP] + L-lysyl-[protein] = N(6)-octanoyl-L-lysyl-[protein] + holo-[ACP] + H(+). Its pathway is protein modification; protein lipoylation via endogenous pathway; protein N(6)-(lipoyl)lysine from octanoyl-[acyl-carrier-protein]: step 1/2. Its function is as follows. Catalyzes the transfer of endogenously produced octanoic acid from octanoyl-acyl-carrier-protein onto the lipoyl domains of lipoate-dependent enzymes. Lipoyl-ACP can also act as a substrate although octanoyl-ACP is likely to be the physiological substrate. The polypeptide is Octanoyltransferase (Shewanella baltica (strain OS155 / ATCC BAA-1091)).